The following is a 423-amino-acid chain: Putative competence-damage inducible protein (423 aa).

It belongs to the CinA family.

In Streptococcus pyogenes serotype M2 (strain MGAS10270), this protein is Putative competence-damage inducible protein.